The following is a 495-amino-acid chain: Protein YhjJ (495 aa).

The first 24 residues, Met1 to Ala24, serve as a signal peptide directing secretion.

The protein belongs to the peptidase M16 family.

Its subcellular location is the periplasm. In Salmonella typhimurium (strain LT2 / SGSC1412 / ATCC 700720), this protein is Protein YhjJ (yhjJ).